The following is a 425-amino-acid chain: F-box/LRR-repeat protein At3g59250 (425 aa).

The F-box domain maps to 6–54; it reads KDKISNLPEALICHILSFLPIEDSALTSVLSKRWRYLFAFRPNLVFDDS. LRR repeat units follow at residues 86 to 113, 138 to 163, 185 to 210, 264 to 293, and 294 to 319; these read DLQV…RIES, MLGK…VLNN, CTES…KYSD, CLSA…TIKT, and NQSV…VFEG.

The protein is F-box/LRR-repeat protein At3g59250 of Arabidopsis thaliana (Mouse-ear cress).